A 369-amino-acid polypeptide reads, in one-letter code: MAVKISLVDLAQNIGAELHGDKNILITHVSSIKNAQVGHITFLKNSRFREQLKSCAASAVILSQDNLSFCRVSALVVKNPYLAYVKVAQLLDSSPKLNANIKSQSVIHSNSILGKDVGIGYNVIIESGVIISDNVKIESGCIIGKNVKIGIGTYLWSNVTVYHGVEIGEYCIIQSGSIIGSDGFGYIKNDGVWIKIPQLGKVSIGNNVEIGSCTTIDRGTLDDTCIGDGVIIDNQCQIAHNVAIGSHTAIAGGVIIAGSVVIGKSCMIGGASVINGHIRICDKVTITGMSMVMKSITTSGIYSSGIPVQPNFAWRRTAALVMRIHSIDKRIKDIEQKVNCFFYIVIVGFFIVLGLTGLFPLIYFFVKQG.

Catalysis depends on His-240, which acts as the Proton acceptor.

Belongs to the transferase hexapeptide repeat family. LpxD subfamily. Homotrimer.

The catalysed reaction is a UDP-3-O-[(3R)-3-hydroxyacyl]-alpha-D-glucosamine + a (3R)-hydroxyacyl-[ACP] = a UDP-2-N,3-O-bis[(3R)-3-hydroxyacyl]-alpha-D-glucosamine + holo-[ACP] + H(+). It catalyses the reaction UDP-3-O-[(3R)-3-hydroxytetradecanoyl]-alpha-D-glucosamine + (3R)-hydroxytetradecanoyl-[ACP] = UDP-2-N,3-O-bis[(3R)-3-hydroxytetradecanoyl]-alpha-D-glucosamine + holo-[ACP] + H(+). It participates in glycolipid biosynthesis; lipid IV(A) biosynthesis; lipid IV(A) from (3R)-3-hydroxytetradecanoyl-[acyl-carrier-protein] and UDP-N-acetyl-alpha-D-glucosamine: step 3/6. Its function is as follows. Catalyzes the N-acylation of UDP-3-O-(hydroxytetradecanoyl)glucosamine using 3-hydroxytetradecanoyl-ACP as the acyl donor. Is involved in the biosynthesis of lipid A, a phosphorylated glycolipid that anchors the lipopolysaccharide to the outer membrane of the cell. The protein is UDP-3-O-(3-hydroxymyristoyl)glucosamine N-acyltransferase of Blochmanniella floridana.